We begin with the raw amino-acid sequence, 159 residues long: Sec-independent protein translocase protein TatB (159 aa).

The chain crosses the membrane as a helical span at residues 1-21; that stretch reads MIDIGLSKMALIGAVALIVIG.

Belongs to the TatB family. The Tat system comprises two distinct complexes: a TatABC complex, containing multiple copies of TatA, TatB and TatC subunits, and a separate TatA complex, containing only TatA subunits. Substrates initially bind to the TatABC complex, which probably triggers association of the separate TatA complex to form the active translocon.

It localises to the cell inner membrane. Its function is as follows. Part of the twin-arginine translocation (Tat) system that transports large folded proteins containing a characteristic twin-arginine motif in their signal peptide across membranes. Together with TatC, TatB is part of a receptor directly interacting with Tat signal peptides. TatB may form an oligomeric binding site that transiently accommodates folded Tat precursor proteins before their translocation. This is Sec-independent protein translocase protein TatB from Acidovorax sp. (strain JS42).